The following is a 186-amino-acid chain: Casparian strip membrane protein 1 (186 aa).

Residues 1–26 (MKSSPAELISEAKSSTQNSKMKRAVS) are Cytoplasmic-facing. The helical transmembrane segment at 27–47 (VLDFILRLIAVVATLASAIAM) threads the bilayer. Over 48-74 (GTTDESLPFFTQFIRFRAEYDDLPTLR) the chain is Extracellular. A helical membrane pass occupies residues 75–95 (LFVVASAFASGYLILSLPLSI). At 96-107 (LHITRSSARRTR) the chain is on the cytoplasmic side. The chain crosses the membrane as a helical span at residues 108–128 (VILIILDMVMLTSLTAASSAA). Residues 129–161 (AAIVYLAHKGNAKANWFAFCQQYDSFCERISGS) are Extracellular-facing. The chain crosses the membrane as a helical span at residues 162–182 (LIGSFIAIPLFIMLILFSALV). Residues 183–186 (LSKR) are Cytoplasmic-facing.

This sequence belongs to the Casparian strip membrane proteins (CASP) family. In terms of assembly, homodimer and heterodimers.

The protein localises to the cell membrane. Functionally, regulates membrane-cell wall junctions and localized cell wall deposition. Required for establishment of the Casparian strip membrane domain (CSD) and the subsequent formation of Casparian strips, a cell wall modification of the root endodermis that determines an apoplastic barrier between the intraorganismal apoplasm and the extraorganismal apoplasm and prevents lateral diffusion. The protein is Casparian strip membrane protein 1 of Lotus japonicus (Lotus corniculatus var. japonicus).